Consider the following 78-residue polypeptide: Translational regulator CsrA (78 aa).

Belongs to the CsrA/RsmA family. In terms of assembly, homodimer; the beta-strands of each monomer intercalate to form a hydrophobic core, while the alpha-helices form wings that extend away from the core.

The protein resides in the cytoplasm. Its function is as follows. A translational regulator that binds mRNA to regulate translation initiation and/or mRNA stability. Usually binds in the 5'-UTR at or near the Shine-Dalgarno sequence preventing ribosome-binding, thus repressing translation. Its main target seems to be the major flagellin gene, while its function is anatagonized by FliW. The polypeptide is Translational regulator CsrA (Nitratidesulfovibrio vulgaris (strain ATCC 29579 / DSM 644 / CCUG 34227 / NCIMB 8303 / VKM B-1760 / Hildenborough) (Desulfovibrio vulgaris)).